The sequence spans 229 residues: Orotidine 5'-phosphate decarboxylase (229 aa).

Residues D10, K32, D59–T68, T119, R180, Q189, G209, and R210 contribute to the substrate site. K61 (proton donor) is an active-site residue.

It belongs to the OMP decarboxylase family. Type 1 subfamily. In terms of assembly, homodimer.

It carries out the reaction orotidine 5'-phosphate + H(+) = UMP + CO2. Its pathway is pyrimidine metabolism; UMP biosynthesis via de novo pathway; UMP from orotate: step 2/2. Its function is as follows. Catalyzes the decarboxylation of orotidine 5'-monophosphate (OMP) to uridine 5'-monophosphate (UMP). This Legionella pneumophila (strain Corby) protein is Orotidine 5'-phosphate decarboxylase.